A 1338-amino-acid polypeptide reads, in one-letter code: Centrosomal P4.1-associated protein (1338 aa).

The interval 190–211 (GLSLLPDDQSQKHRSPGNTTTG) is disordered. A phosphoserine mark is found at serine 260 and serine 316. Positions 319–394 (VANIEERPIK…FTNAKSKFQK (76 aa)) are alpha/beta-tubulin binding. Disordered regions lie at residues 386-414 (TNAKSKFQKGKESKLVTNQSTSEDQPLFK), 436-479 (PILK…QTGK), and 521-551 (QGKDRLPLSTGPASRLAAKSPIRETMKESES). The span at 400 to 409 (LVTNQSTSED) shows a compositional bias: polar residues. A Phosphoserine modification is found at serine 540. Over residues 541-550 (PIRETMKESE) the composition is skewed to basic and acidic residues. Phosphoserine; by PLK2 is present on serine 589. Serine 595 carries the phosphoserine; by PLK2 and PLK4 modification. 3 disordered regions span residues 611–789 (HRMS…LSLS), 845–865 (VKRGEDLSKSRRSRSPPTSEL), and 1096–1153 (YLPM…QGEI). Over residues 635-650 (NRSEDLDHTAREKESE) the composition is skewed to basic and acidic residues. Positions 679-689 (QKSTSENQTEW) are enriched in polar residues. Residues 717 to 764 (STEDRERGISSREDSPQVCDDKGPFKDTRTQEDKRRDVDLDLSDKDYS) are compositionally biased toward basic and acidic residues. Residue serine 759 is modified to Phosphoserine. Residues 895-1338 (QPPGDNARSQ…EGNVLMDTEL (444 aa)) form an interaction with STIL region. Acidic residues predominate over residues 1140–1149 (YKEEEEDQDI).

It belongs to the TCP10 family. Forms homodimers. Associates with microtubules plus ends; binds to beta-tubulin subunits exposed on microtubule outer surface at its distal tip; also associates with microtubule lattice. Associated with the gamma-tubulin complex. Interacts with the head domain of EPB41. Interacts with LYST. Interacts with CEP152 (via C-terminus). Interacts with STIL. Forms a complex with STIL and SASS6. In terms of processing, phosphorylation at Ser-589 and Ser-595 by PLK2 is required for procentriole formation and centriole elongation. Phosphorylation by PLK2 oscillates during the cell cycle: it increases at G1/S transition and decreases during the exit from mitosis. Phosphorylation at Ser-595 is also mediated by PLK4 but is not a critical step in PLK4 function in procentriole assembly.

It is found in the cytoplasm. Its subcellular location is the cytoskeleton. It localises to the microtubule organizing center. The protein resides in the centrosome. The protein localises to the centriole. Its function is as follows. Plays an important role in cell division and centrosome function by participating in centriole duplication. Inhibits microtubule nucleation from the centrosome. Involved in the regulation of slow processive growth of centriolar microtubules. Acts as a microtubule plus-end tracking protein that stabilizes centriolar microtubules and inhibits microtubule polymerization and extension from the distal ends of centrioles. Required for centriole elongation and for STIL-mediated centriole amplification. Required for the recruitment of CEP295 to the proximal end of new-born centrioles at the centriolar microtubule wall during early S phase in a PLK4-dependent manner. May be involved in the control of centriolar-microtubule growth by acting as a regulator of tubulin release. This Homo sapiens (Human) protein is Centrosomal P4.1-associated protein.